The sequence spans 348 residues: Oxygen-dependent coproporphyrinogen-III oxidase (348 aa).

Residue Ser104 participates in substrate binding. A divalent metal cation-binding residues include His108 and His118. His118 acts as the Proton donor in catalysis. A substrate-binding site is contributed by 120–122; sequence NYR. The a divalent metal cation site is built by His152 and His182. Residues 272-307 form an important for dimerization region; it reads YAEFNLVWDRGTIFGLQTNGRTESILMSLPPLARWE.

Belongs to the aerobic coproporphyrinogen-III oxidase family. Homodimer. It depends on a divalent metal cation as a cofactor.

Its subcellular location is the cytoplasm. It catalyses the reaction coproporphyrinogen III + O2 + 2 H(+) = protoporphyrinogen IX + 2 CO2 + 2 H2O. Its pathway is porphyrin-containing compound metabolism; protoporphyrin-IX biosynthesis; protoporphyrinogen-IX from coproporphyrinogen-III (O2 route): step 1/1. Its function is as follows. Involved in the heme and chlorophyll biosynthesis. Catalyzes the aerobic oxidative decarboxylation of propionate groups of rings A and B of coproporphyrinogen-III to yield the vinyl groups in protoporphyrinogen-IX. The protein is Oxygen-dependent coproporphyrinogen-III oxidase of Prochlorococcus marinus (strain NATL2A).